A 173-amino-acid polypeptide reads, in one-letter code: Transcription factor E (173 aa).

One can recognise an HTH TFE/IIEalpha-type domain in the interval 9–92 (NNPATRAYIH…LWQLRIDLLY (84 aa)).

This sequence belongs to the TFE family. As to quaternary structure, monomer. Interaction with RNA polymerase subunits RpoF and RpoE is necessary for Tfe stimulatory transcription activity. Able to interact with Tbp and RNA polymerase in the absence of DNA promoter. Interacts both with the preinitiation and elongation complexes.

In terms of biological role, transcription factor that plays a role in the activation of archaeal genes transcribed by RNA polymerase. Facilitates transcription initiation by enhancing TATA-box recognition by TATA-box-binding protein (Tbp), and transcription factor B (Tfb) and RNA polymerase recruitment. Not absolutely required for transcription in vitro, but particularly important in cases where Tbp or Tfb function is not optimal. It dynamically alters the nucleic acid-binding properties of RNA polymerases by stabilizing the initiation complex and destabilizing elongation complexes. Seems to translocate with the RNA polymerase following initiation and acts by binding to the non template strand of the transcription bubble in elongation complexes. The sequence is that of Transcription factor E from Methanoregula boonei (strain DSM 21154 / JCM 14090 / 6A8).